Here is a 198-residue protein sequence, read N- to C-terminus: Segregation and condensation protein B (198 aa).

The protein belongs to the ScpB family. In terms of assembly, homodimer. Homodimerization may be required to stabilize the binding of ScpA to the Smc head domains. Component of a cohesin-like complex composed of ScpA, ScpB and the Smc homodimer, in which ScpA and ScpB bind to the head domain of Smc. The presence of the three proteins is required for the association of the complex with DNA.

Its subcellular location is the cytoplasm. In terms of biological role, participates in chromosomal partition during cell division. May act via the formation of a condensin-like complex containing Smc and ScpA that pull DNA away from mid-cell into both cell halves. The protein is Segregation and condensation protein B of Acetivibrio thermocellus (strain ATCC 27405 / DSM 1237 / JCM 9322 / NBRC 103400 / NCIMB 10682 / NRRL B-4536 / VPI 7372) (Clostridium thermocellum).